Here is a 263-residue protein sequence, read N- to C-terminus: Protein TILLER ANGLE CONTROL 1 (263 aa).

An IGT motif motif is present at residues 55-61; that stretch reads GILAIGT. The disordered stretch occupies residues 243 to 263; sequence GKKIHPEQLNGRSNAEGPLTA.

The protein belongs to the TAC family. As to expression, highly expressed in leaf sheath pulvinus. Expressed in shoot apical meristem and leaves.

Its function is as follows. Involved in the regulation of leaf growth angle. Promotes horizontal shoot growth. This chain is Protein TILLER ANGLE CONTROL 1, found in Zea mays (Maize).